The following is a 364-amino-acid chain: MSDDKLDTLPDLQSETSHVTTPHRQNDLLRQAVTHGRPPPVPSTSTSGKKREMSELPWSDFFDEKKDANIDGDVFNVYIKGNEGPIFYLLHGGGYSGLTWACFAKELATLISCRVVAPDLRGHGDTKCSDEHDLSKETQIKDIGAIFKNIFGEDDSPVCIVGHSMGGALAIHTLNAKMISSKVAALIVIDVVEGSAMEALGGMVHFLHSRPSSFPSIEKAIHWCLSSGTARNPTAARVSMPSQIREVSEHEYTWRIDLTTTEQYWKGWFEGLSKEFLGCSVPKMLVLAGVDRLDRDLTIGQMQGKFQTCVLPKVGHCVQEDSPQNLADEVGRFACRHRIAQPKFSALASPPDPAILEYRKRHHQ.

Positions 1 to 53 (MSDDKLDTLPDLQSETSHVTTPHRQNDLLRQAVTHGRPPPVPSTSTSGKKREM) are disordered. The segment covering 11-23 (DLQSETSHVTTPH) has biased composition (polar residues). Residues Ser-164, Asp-190, and His-316 contribute to the active site.

This sequence belongs to the AB hydrolase superfamily.

The catalysed reaction is [phosphatase 2A protein]-C-terminal L-leucine methyl ester + H2O = [phosphatase 2A protein]-C-terminal L-leucine + methanol + H(+). In terms of biological role, demethylates proteins that have been reversibly carboxymethylated. This chain is Probable protein phosphatase methylesterase 1, found in Caenorhabditis elegans.